The sequence spans 426 residues: UDP-N-acetylglucosamine--N-acetylmuramyl-(pentapeptide) pyrophosphoryl-undecaprenol N-acetylglucosamine transferase (426 aa).

Residues T28–G30, N140, R176, S204, I257, and Q302 each bind UDP-N-acetyl-alpha-D-glucosamine. The interval A369 to R388 is disordered.

It belongs to the glycosyltransferase 28 family. MurG subfamily.

Its subcellular location is the cell inner membrane. The enzyme catalyses di-trans,octa-cis-undecaprenyl diphospho-N-acetyl-alpha-D-muramoyl-L-alanyl-D-glutamyl-meso-2,6-diaminopimeloyl-D-alanyl-D-alanine + UDP-N-acetyl-alpha-D-glucosamine = di-trans,octa-cis-undecaprenyl diphospho-[N-acetyl-alpha-D-glucosaminyl-(1-&gt;4)]-N-acetyl-alpha-D-muramoyl-L-alanyl-D-glutamyl-meso-2,6-diaminopimeloyl-D-alanyl-D-alanine + UDP + H(+). It participates in cell wall biogenesis; peptidoglycan biosynthesis. Functionally, cell wall formation. Catalyzes the transfer of a GlcNAc subunit on undecaprenyl-pyrophosphoryl-MurNAc-pentapeptide (lipid intermediate I) to form undecaprenyl-pyrophosphoryl-MurNAc-(pentapeptide)GlcNAc (lipid intermediate II). This is UDP-N-acetylglucosamine--N-acetylmuramyl-(pentapeptide) pyrophosphoryl-undecaprenol N-acetylglucosamine transferase from Xanthomonas axonopodis pv. citri (strain 306).